Reading from the N-terminus, the 156-residue chain is MDINITLIGQMITFAIFIGFTMKFVWPPLRKALEERREKIAEGLASADRASRELEVAKRQSAEILREAKAKATEIVENAYVRAHKVDEQAKEEAIAAADKIKSMAIAEIEQEKVKAKEQLKQELVNLAMAAASKIIAASVDEKASKKVLEDFVEKV.

Residues 5-27 (ITLIGQMITFAIFIGFTMKFVWP) form a helical membrane-spanning segment.

Belongs to the ATPase B chain family. F-type ATPases have 2 components, F(1) - the catalytic core - and F(0) - the membrane proton channel. F(1) has five subunits: alpha(3), beta(3), gamma(1), delta(1), epsilon(1). F(0) has three main subunits: a(1), b(2) and c(10-14). The alpha and beta chains form an alternating ring which encloses part of the gamma chain. F(1) is attached to F(0) by a central stalk formed by the gamma and epsilon chains, while a peripheral stalk is formed by the delta and b chains.

The protein localises to the cell inner membrane. Its function is as follows. F(1)F(0) ATP synthase produces ATP from ADP in the presence of a proton or sodium gradient. F-type ATPases consist of two structural domains, F(1) containing the extramembraneous catalytic core and F(0) containing the membrane proton channel, linked together by a central stalk and a peripheral stalk. During catalysis, ATP synthesis in the catalytic domain of F(1) is coupled via a rotary mechanism of the central stalk subunits to proton translocation. Component of the F(0) channel, it forms part of the peripheral stalk, linking F(1) to F(0). This chain is ATP synthase subunit b, found in Francisella tularensis subsp. holarctica (strain OSU18).